The primary structure comprises 280 residues: SPX domain-containing protein 2 (280 aa).

Residues 1-162 (MKFGKSLSSQ…GSMIRLPFVQ (162 aa)) enclose the SPX domain. 2 disordered regions span residues 191–244 (PTNE…KSTV) and 257–280 (GSSTVSVFSLPPLHGSNGQDEPGR).

In terms of assembly, interacts (via SPX domain) with PHR2 (via C-terminus). Interacts with RLI1 in the nucleus to prevents its positive regulation of leaf inclination during phosphate (Pi) starvation. As to expression, predominantly expressed in roots, leaves and seeds. Localized in leaves lamina joints.

The protein localises to the nucleus. Inhibits PHR2 DNA-binding activity via a phosphate (Pi)-dependent protein interaction. Together with SPX1, plays a negative role in the regulation of leaf inclination by preventing RLI1 transcription factor activity in Pi depleted conditions. The chain is SPX domain-containing protein 2 from Oryza sativa subsp. japonica (Rice).